The following is a 137-amino-acid chain: Probable 4-amino-4-deoxy-L-arabinose-phosphoundecaprenol flippase subunit ArnF (137 aa).

Residues 1 to 5 (MNVPR) are Cytoplasmic-facing. The helical transmembrane segment at 6 to 26 (GWLAALGSVLLVSAAQLGMRW) threads the bilayer. Residues 27–44 (GMSRLPLPEAWAGQTPEH) lie on the Periplasmic side of the membrane. A helical transmembrane segment spans residues 45–65 (AALLAVALAVAAYAASLLCWL). Residues 66–76 (AALRHLPLGRA) lie on the Cytoplasmic side of the membrane. A helical membrane pass occupies residues 77-97 (YSLLSASYALVYLLAASLPAF). Over 98–100 (EET) the chain is Periplasmic. A helical membrane pass occupies residues 101 to 121 (FTTGKTLGVGLVVLGVLTVNA). The Cytoplasmic portion of the chain corresponds to 122–137 (RRTAAAPAHHPSRKAL).

This sequence belongs to the ArnF family. Heterodimer of ArnE and ArnF.

It localises to the cell inner membrane. Its pathway is bacterial outer membrane biogenesis; lipopolysaccharide biosynthesis. Translocates 4-amino-4-deoxy-L-arabinose-phosphoundecaprenol (alpha-L-Ara4N-phosphoundecaprenol) from the cytoplasmic to the periplasmic side of the inner membrane. The chain is Probable 4-amino-4-deoxy-L-arabinose-phosphoundecaprenol flippase subunit ArnF from Pseudomonas paraeruginosa (strain DSM 24068 / PA7) (Pseudomonas aeruginosa (strain PA7)).